Reading from the N-terminus, the 180-residue chain is uncharacterized protein (180 aa).

The N-acetyltransferase domain occupies 31 to 180 (LLVRTAEWLR…HLFEKEITAE (150 aa)).

It belongs to the acetyltransferase family.

This is an uncharacterized protein from Bacillus subtilis (strain 168).